The primary structure comprises 442 residues: MTSPNNYLAKIKVVGVGGGGVNAVNRMIEEGLKGVEFIAVNTDSQALMFSDADVKLDIGREATRGLGAGANPEVGRASAEDHKNEIEETIKGADMVFVTAGEGGGTGTGAAPVVAGIAKKMGALTIGVVTKPFEFEGRRRTRQAEEGIAALKEVCDTLIVIPNDRLLELGDANLSIMEAFRAADEVLHNGVQGITNLITIPGVINVDFADVRSVMSEAGSALMGVGSARGDNRVVSATEQAINSPLLEATMDGATGVLLSFAGGSDLGLMEVNAAASMVRERSDEDVNLIFGTIIDDNLGDEVRVTVIATGFDAARASAAENRRAGISAAPAAEPVQQQVPTTNATLPPEKESIFGGAREENDPYLSRSAGARHRIEETRSGGGLFTTGNDRDYRRDERREDHRDERRDERRDDRSYDRRDDRRDDRRDDRGDDLDVPSFLQ.

GTP contacts are provided by residues 18-22 (GGGVN), 105-107 (GTG), Glu-136, Arg-140, and Asp-184. The segment covering 329–341 (AAPAAEPVQQQVP) has biased composition (low complexity). Positions 329–442 (AAPAAEPVQQ…DDLDVPSFLQ (114 aa)) are disordered. Basic and acidic residues-rich tracts occupy residues 349 to 362 (PEKESIFGGAREEN) and 390 to 431 (NDRD…RDDR).

It belongs to the FtsZ family. Homodimer. Polymerizes to form a dynamic ring structure in a strictly GTP-dependent manner. Interacts directly with several other division proteins.

It localises to the cytoplasm. Functionally, essential cell division protein that forms a contractile ring structure (Z ring) at the future cell division site. The regulation of the ring assembly controls the timing and the location of cell division. One of the functions of the FtsZ ring is to recruit other cell division proteins to the septum to produce a new cell wall between the dividing cells. Binds GTP and shows GTPase activity. The sequence is that of Cell division protein FtsZ from Corynebacterium glutamicum (strain ATCC 13032 / DSM 20300 / JCM 1318 / BCRC 11384 / CCUG 27702 / LMG 3730 / NBRC 12168 / NCIMB 10025 / NRRL B-2784 / 534).